A 144-amino-acid chain; its full sequence is Transcriptional regulator SlyA (144 aa).

One can recognise an HTH marR-type domain in the interval 2-135 (ESTLGSDLAR…LVGLIGKLEQ (134 aa)). The H-T-H motif DNA-binding region spans 49–72 (QIQLAKAIGIEQPSLVRTLDQLEE).

This sequence belongs to the SlyA family. As to quaternary structure, homodimer.

Functionally, transcription regulator that can specifically activate or repress expression of target genes. This is Transcriptional regulator SlyA from Serratia proteamaculans (strain 568).